Reading from the N-terminus, the 635-residue chain is Sodium- and chloride-dependent creatine transporter 1 (635 aa).

The segment at 1 to 27 (MAKKSAENGIYSVSGDEKKGPLIVSGP) is disordered. Residues 1 to 60 (MAKKSAENGIYSVSGDEKKGPLIVSGPDGAPAKGDGPAGLGAPGGRLAVPPRETWTRQMD) lie on the Cytoplasmic side of the membrane. Residues 61-81 (FIMSCVGFAVGLGNVWRFPYL) form a helical membrane-spanning segment. Over 82 to 87 (CYKNGG) the chain is Extracellular. The helical transmembrane segment at 88 to 108 (GVFLIPYVLIALVGGIPIFFL) threads the bilayer. Topologically, residues 109 to 138 (EISLGQFMKAGSINVWNICPLFKGLGYASM) are cytoplasmic. The helical transmembrane segment at 139–159 (VIVFYCNTYYIMVLAWGFYYL) threads the bilayer. Topologically, residues 160–230 (VKSFTTTLPW…LSTGLEVPGA (71 aa)) are extracellular. Residues N192 and N197 are each glycosylated (N-linked (GlcNAc...) asparagine). A helical transmembrane segment spans residues 231–251 (LNWEVTLCLLACWVLVYFCVW). The Cytoplasmic segment spans residues 252–269 (KGVKSTGKIVYFTATFPY). The chain crosses the membrane as a helical span at residues 270–290 (VVLVVLLVRGVLLPGALDGII). Over 291-304 (YYLKPDWSKLGSPQ) the chain is Extracellular. Residues 305-325 (VWIDAGTQIFFSYAIGLGALT) traverse the membrane as a helical segment. The Cytoplasmic segment spans residues 326–341 (ALGSYNRFNNNCYKDA). A helical membrane pass occupies residues 342–362 (IILALINSGTSFFAGFVVFSI). Over 363–394 (LGFMATEQGVHISKVAESGPGLAFIAYPRAVT) the chain is Extracellular. The chain crosses the membrane as a helical span at residues 395-415 (LMPVAPLWAALFFFMLLLLGL). At 416–444 (DSQFVGVEGFITGLLDLLPASYYFRFQRE) the chain is on the cytoplasmic side. A helical membrane pass occupies residues 445–465 (ISVALCCALCFVIDLSMVTDG). Residues 466-479 (GMYVFQLFDYYSAS) are Extracellular-facing. Residues 480–500 (GTTLLWQAFWECVVVAWVYGA) form a helical membrane-spanning segment. Residues 501–520 (DRFMDDIACMIGYRPCPWMK) are Cytoplasmic-facing. Residues 521–541 (WCWSFFTPLVCMGIFIFNIVY) form a helical membrane-spanning segment. The Extracellular portion of the chain corresponds to 542-560 (YEPLVYNNTYVYPWWGEAM). An N-linked (GlcNAc...) asparagine glycan is attached at N548. The helical transmembrane segment at 561–581 (GWAFALSSMLCVPLHLLGCLL) threads the bilayer. Residues 582–635 (RAKGTMAERWQHLTQPIWGLHHLEYRAQDADVRGLTTLTPVSESSKVVVVESVM) lie on the Cytoplasmic side of the membrane. A phosphothreonine mark is found at T617 and T620. Position 623 is a phosphoserine (S623).

It belongs to the sodium:neurotransmitter symporter (SNF) (TC 2.A.22) family. SLC6A8 subfamily. In terms of processing, glycosylated. As to expression, brain. Highly expressed in brain capillaries branching in all cortical layers and moderately expressed in neuronal perikarya (at protein level).

The protein localises to the cell membrane. It is found in the apical cell membrane. The catalysed reaction is creatine(out) + chloride(out) + 2 Na(+)(out) = creatine(in) + chloride(in) + 2 Na(+)(in). In terms of biological role, creatine:sodium symporter which mediates the uptake of creatine. Plays an important role in supplying creatine to the brain via the blood-brain barrier. In Mus musculus (Mouse), this protein is Sodium- and chloride-dependent creatine transporter 1 (Slc6a8).